The chain runs to 1051 residues: DNA-directed RNA polymerase subunit beta (1051 aa).

Belongs to the RNA polymerase beta chain family. In terms of assembly, in plastids the minimal PEP RNA polymerase catalytic core is composed of four subunits: alpha, beta, beta', and beta''. When a (nuclear-encoded) sigma factor is associated with the core the holoenzyme is formed, which can initiate transcription (Potential).

The protein resides in the plastid. It is found in the apicoplast. The catalysed reaction is RNA(n) + a ribonucleoside 5'-triphosphate = RNA(n+1) + diphosphate. DNA-dependent RNA polymerase catalyzes the transcription of DNA into RNA using the four ribonucleoside triphosphates as substrates. The chain is DNA-directed RNA polymerase subunit beta (rpoB) from Toxoplasma gondii.